The chain runs to 205 residues: Octanoyltransferase (205 aa).

A BPL/LPL catalytic domain is found at 30-205; the sequence is NSADELVWLL…ILKKEFYKIF (176 aa). Substrate is bound by residues 68–75, 140–142, and 153–155; these read RGGKHTYH, AFG, and GIA. Catalysis depends on C171, which acts as the Acyl-thioester intermediate.

Belongs to the LipB family.

It localises to the cytoplasm. It catalyses the reaction octanoyl-[ACP] + L-lysyl-[protein] = N(6)-octanoyl-L-lysyl-[protein] + holo-[ACP] + H(+). It participates in protein modification; protein lipoylation via endogenous pathway; protein N(6)-(lipoyl)lysine from octanoyl-[acyl-carrier-protein]: step 1/2. Catalyzes the transfer of endogenously produced octanoic acid from octanoyl-acyl-carrier-protein onto the lipoyl domains of lipoate-dependent enzymes. Lipoyl-ACP can also act as a substrate although octanoyl-ACP is likely to be the physiological substrate. This chain is Octanoyltransferase, found in Wolbachia pipientis wMel.